The chain runs to 184 residues: TATA-box-binding protein (184 aa).

Tandem repeats lie at residues 9 to 85 (IENI…IDKL) and 100 to 178 (VQNI…KKEL).

It belongs to the TBP family.

Functionally, general factor that plays a role in the activation of archaeal genes transcribed by RNA polymerase. Binds specifically to the TATA box promoter element which lies close to the position of transcription initiation. The protein is TATA-box-binding protein of Thermoplasma volcanium (strain ATCC 51530 / DSM 4299 / JCM 9571 / NBRC 15438 / GSS1).